We begin with the raw amino-acid sequence, 105 residues long: Replication initiation control protein YabA (105 aa).

His-79, Cys-81, Cys-95, and Cys-98 together coordinate Zn(2+).

The protein belongs to the YabA family. In terms of assembly, homotetramer. Interacts with both DnaA and DnaN, acting as a bridge between these two proteins. It depends on Zn(2+) as a cofactor.

The protein localises to the cytoplasm. It localises to the nucleoid. Involved in control of chromosome replication initiation. Inhibits the cooperative binding of DnaA to the oriC region, thus negatively regulating initiation of chromosome replication. Inhibits the ability of DnaA-ATP to form a helix on DNA; does not disassemble preformed DnaA-DNA helices. Decreases the residence time of DnaA on the chromosome at its binding sites (oriC, replication forks and promoter-binding sites). Tethers DnaA to the replication machinery via the DNA polymerase beta sliding clamp subunit (dnaN). Associates with oriC and other DnaA targets on the chromosome in a DnaA-dependent manner. The chain is Replication initiation control protein YabA from Streptococcus pneumoniae serotype 2 (strain D39 / NCTC 7466).